Consider the following 247-residue polypeptide: Pulmonary surfactant-associated protein A (247 aa).

Positions 1–19 are cleaved as a signal peptide; sequence MWCSLALILILVTVSGIMC. An N-linked (GlcNAc...) asparagine glycan is attached at Asn-20. Residues 27–99 form the Collagen-like domain; it reads GSPGIPGTPG…PGERGPPGLP (73 aa). 9 positions are modified to 4-hydroxyproline: Pro-29, Pro-32, Pro-35, Pro-41, Pro-53, Pro-56, Pro-62, Pro-66, and Pro-69. The interval 32 to 101 is disordered; sequence PGTPGSHGLP…ERGPPGLPAS (70 aa). The span at 41–50 shows a compositional bias: basic and acidic residues; sequence PGRDGRDGVK. Residues 53–64 show a composition bias toward pro residues; that stretch reads PGPPGPMGPPGV. The segment covering 83–92 has biased composition (basic and acidic residues); it reads ERGDKGDPGE. The region spanning 131–247 is the C-type lectin domain; sequence LAVGDKVFAT…LQSRLTICEF (117 aa). Intrachain disulfides connect Cys-154/Cys-245 and Cys-223/Cys-237. A glycan (N-linked (GlcNAc...) asparagine) is linked at Asn-206. Ca(2+) contacts are provided by Glu-214, Arg-216, Asn-233, and Asp-234.

The protein belongs to the SFTPA family. As to quaternary structure, oligomeric complex of 6 set of homotrimers.

The protein resides in the secreted. It is found in the extracellular space. Its subcellular location is the extracellular matrix. The protein localises to the surface film. Functionally, in presence of calcium ions, it binds to surfactant phospholipids and contributes to lower the surface tension at the air-liquid interface in the alveoli of the mammalian lung and is essential for normal respiration. Enhances the expression of MYO18A/SP-R210 on alveolar macrophages. In Cavia porcellus (Guinea pig), this protein is Pulmonary surfactant-associated protein A (SFTPA1).